Reading from the N-terminus, the 298-residue chain is Probable GTP 3',8-cyclase (298 aa).

A Radical SAM core domain is found at 4 to 221 (RYGREIRSFR…VFTRKFMQNR (218 aa)). A GTP-binding site is contributed by Arg13. [4Fe-4S] cluster-binding residues include Cys20 and Cys24. Tyr26 lines the S-adenosyl-L-methionine pocket. Cys27 contributes to the [4Fe-4S] cluster binding site. A GTP-binding site is contributed by Lys61. Gly65 provides a ligand contact to S-adenosyl-L-methionine. Thr91 is a GTP binding site. Ser115 is a binding site for S-adenosyl-L-methionine. Lys152 serves as a coordination point for GTP. 2 residues coordinate [4Fe-4S] cluster: Cys243 and Cys246. Residue 248 to 250 (RIR) participates in GTP binding. Residue Cys260 coordinates [4Fe-4S] cluster.

The protein belongs to the radical SAM superfamily. MoaA family. [4Fe-4S] cluster is required as a cofactor.

It catalyses the reaction GTP + AH2 + S-adenosyl-L-methionine = (8S)-3',8-cyclo-7,8-dihydroguanosine 5'-triphosphate + 5'-deoxyadenosine + L-methionine + A + H(+). The protein operates within cofactor biosynthesis; molybdopterin biosynthesis. Its function is as follows. Catalyzes the cyclization of GTP to (8S)-3',8-cyclo-7,8-dihydroguanosine 5'-triphosphate. The sequence is that of Probable GTP 3',8-cyclase from Methanococcus maripaludis (strain C7 / ATCC BAA-1331).